A 148-amino-acid chain; its full sequence is Large ribosomal subunit protein uL15 (148 aa).

Over residues 1–30 (MTHSKRNTRKLRGHVSHGHGRVGKHRKHPG) the composition is skewed to basic residues. Residues 1–38 (MTHSKRNTRKLRGHVSHGHGRVGKHRKHPGGRGMAGPE) are disordered.

It belongs to the universal ribosomal protein uL15 family.

This is Large ribosomal subunit protein uL15 (RPL27A) from Euplotes crassus.